Reading from the N-terminus, the 197-residue chain is MEHYLSLFIKSVFIENMALSFFLGMCTFLAVSKKVSTAFGLGVAVIFVLGLSVPANQLVYSLLKDGAIVEGVDLTFLKFITFIGVIAALVQILEMFLDKFVPALYNALGIYLPLITVNCAIFGAVSFMAQREYGFGESVVYGFGAGLGWMLAIVALAGITEKMKYSDAPKGLKGLGITFIAAGLMAMAFMSFSGIQL.

The next 6 membrane-spanning stretches (helical) occupy residues 11 to 31 (SVFIENMALSFFLGMCTFLAV), 35 to 55 (VSTAFGLGVAVIFVLGLSVPA), 76 to 96 (FLKFITFIGVIAALVQILEMF), 108 to 128 (LGIYLPLITVNCAIFGAVSFM), 139 to 159 (VVYGFGAGLGWMLAIVALAGI), and 175 to 195 (LGITFIAAGLMAMAFMSFSGI).

This sequence belongs to the NqrDE/RnfAE family. Composed of six subunits; NqrA, NqrB, NqrC, NqrD, NqrE and NqrF.

The protein resides in the cell inner membrane. It carries out the reaction a ubiquinone + n Na(+)(in) + NADH + H(+) = a ubiquinol + n Na(+)(out) + NAD(+). Functionally, NQR complex catalyzes the reduction of ubiquinone-1 to ubiquinol by two successive reactions, coupled with the transport of Na(+) ions from the cytoplasm to the periplasm. NqrA to NqrE are probably involved in the second step, the conversion of ubisemiquinone to ubiquinol. The chain is Na(+)-translocating NADH-quinone reductase subunit E from Neisseria meningitidis serogroup A / serotype 4A (strain DSM 15465 / Z2491).